The following is a 182-amino-acid chain: MDKFDANRRKLLALGGVALGAAILPTPAFATLSTPRPRILTLNNLHTGESIKAEFFDGRGYIQEELAKLNHFFRDYRANKIKSIDPGLFDQLYRLQGLLGTRKPVQLISGYRSIDTNNELRARSRGVAKKSYHTKGQAMDFHIEGIALSNIRKAALSMRAGGVGYYPRSNFVHIDTGPARHW.

The tat-type signal signal peptide spans 1–30; sequence MDKFDANRRKLLALGGVALGAAILPTPAFA. Zn(2+) contacts are provided by histidine 133, aspartate 140, and histidine 173.

This sequence belongs to the peptidase M15 family. It depends on Zn(2+) as a cofactor. Predicted to be exported by the Tat system. The position of the signal peptide cleavage has not been experimentally proven.

It participates in cell wall biogenesis; cell wall polysaccharide biosynthesis. Functionally, l,D-endopeptidase that cleaves meso-diaminopimelic acid (mDAP)-mDAP cross-links in peptidoglycan. It works in conjunction with other elongation-specific D,D-endopeptidases to make space for efficient incorporation of nascent peptidoglycan strands into the sacculus and thus enable cell wall expansion. The chain is Peptidoglycan L,D-endopeptidase MepK from Escherichia coli O157:H7.